The sequence spans 162 residues: Ribosome maturation factor RimM (162 aa).

Positions 90 to 161 constitute a PRC barrel domain; sequence EDCYYEADIV…KIIIKPLEVW (72 aa).

The protein belongs to the RimM family. In terms of assembly, binds ribosomal protein uS19.

Its subcellular location is the cytoplasm. Functionally, an accessory protein needed during the final step in the assembly of 30S ribosomal subunit, possibly for assembly of the head region. Essential for efficient processing of 16S rRNA. May be needed both before and after RbfA during the maturation of 16S rRNA. It has affinity for free ribosomal 30S subunits but not for 70S ribosomes. The protein is Ribosome maturation factor RimM of Clostridium novyi (strain NT).